The chain runs to 440 residues: uncharacterized protein (440 aa).

This is an uncharacterized protein from Rickettsia prowazekii (strain Madrid E).